Reading from the N-terminus, the 470-residue chain is Uronate isomerase (470 aa).

This sequence belongs to the metallo-dependent hydrolases superfamily. Uronate isomerase family.

The catalysed reaction is D-glucuronate = D-fructuronate. It carries out the reaction aldehydo-D-galacturonate = keto-D-tagaturonate. It participates in carbohydrate metabolism; pentose and glucuronate interconversion. This Klebsiella pneumoniae (strain 342) protein is Uronate isomerase.